The chain runs to 124 residues: NAD(P)H-quinone oxidoreductase subunit 5, chloroplastic (124 aa).

Transmembrane regions (helical) follow at residues 22-42 (TPIS…FLVA), 44-64 (LLPL…IGII), and 91-111 (LGYM…FHLI).

The protein belongs to the complex I subunit 5 family. As to quaternary structure, NDH is composed of at least 16 different subunits, 5 of which are encoded in the nucleus.

Its subcellular location is the plastid. The protein resides in the chloroplast thylakoid membrane. It catalyses the reaction a plastoquinone + NADH + (n+1) H(+)(in) = a plastoquinol + NAD(+) + n H(+)(out). The catalysed reaction is a plastoquinone + NADPH + (n+1) H(+)(in) = a plastoquinol + NADP(+) + n H(+)(out). In terms of biological role, NDH shuttles electrons from NAD(P)H:plastoquinone, via FMN and iron-sulfur (Fe-S) centers, to quinones in the photosynthetic chain and possibly in a chloroplast respiratory chain. The immediate electron acceptor for the enzyme in this species is believed to be plastoquinone. Couples the redox reaction to proton translocation, and thus conserves the redox energy in a proton gradient. In Pisum sativum (Garden pea), this protein is NAD(P)H-quinone oxidoreductase subunit 5, chloroplastic (ndhF).